Here is a 234-residue protein sequence, read N- to C-terminus: Peptidyl-tRNA hydrolase (234 aa).

TRNA is bound at residue Y14. H19 acts as the Proton acceptor in catalysis. The tRNA site is built by F64, N66, and N112. The disordered stretch occupies residues 187-234; that stretch reads TGTKADEEKPKPAKSHIHQARNGVQPKKLPETGPMAEMLKKMFGPKKD.

This sequence belongs to the PTH family. Monomer.

The protein localises to the cytoplasm. It catalyses the reaction an N-acyl-L-alpha-aminoacyl-tRNA + H2O = an N-acyl-L-amino acid + a tRNA + H(+). In terms of biological role, hydrolyzes ribosome-free peptidyl-tRNAs (with 1 or more amino acids incorporated), which drop off the ribosome during protein synthesis, or as a result of ribosome stalling. Its function is as follows. Catalyzes the release of premature peptidyl moieties from peptidyl-tRNA molecules trapped in stalled 50S ribosomal subunits, and thus maintains levels of free tRNAs and 50S ribosomes. The sequence is that of Peptidyl-tRNA hydrolase from Allorhizobium ampelinum (strain ATCC BAA-846 / DSM 112012 / S4) (Agrobacterium vitis (strain S4)).